The chain runs to 95 residues: Large ribosomal subunit protein eL43 (95 aa).

The segment at 38–59 (CPDCGSEAVSREGTGIWQCGKC) adopts a C4-type zinc-finger fold.

The protein belongs to the eukaryotic ribosomal protein eL43 family. The cofactor is Zn(2+).

This chain is Large ribosomal subunit protein eL43, found in Halobacterium salinarum (strain ATCC 29341 / DSM 671 / R1).